A 351-amino-acid chain; its full sequence is Photosystem II D2 protein (351 aa).

A helical membrane pass occupies residues 39 to 59 (CSYLALGGWLTGTTFVTSWYT). Chlorophyll a is bound at residue His-116. Residues 123 to 139 (GFCLRQFEIARLVGIRP) form a helical membrane-spanning segment. Pheophytin a is bound by residues Gln-128 and Asn-141. Residues 151-164 (VFVSVFLMYPLGQA) traverse the membrane as a helical segment. His-196 lines the chlorophyll a pocket. The chain crosses the membrane as a helical span at residues 206 to 226 (GALLCAIHGATVQNTLFEDGD). Residues His-213 and Phe-260 each contribute to the a plastoquinone site. His-213 contributes to the Fe cation binding site. His-267 contributes to the Fe cation binding site. Residues 277–293 (GLWTSAFGIVGLALNLR) form a helical membrane-spanning segment.

Belongs to the reaction center PufL/M/PsbA/D family. PSII is composed of 1 copy each of membrane proteins PsbA, PsbB, PsbC, PsbD, PsbE, PsbF, PsbH, PsbI, PsbJ, PsbK, PsbL, PsbM, PsbT, PsbX, PsbY, PsbZ, Psb30/Ycf12, at least 3 peripheral proteins of the oxygen-evolving complex and a large number of cofactors. It forms dimeric complexes. The D1/D2 heterodimer binds P680, chlorophylls that are the primary electron donor of PSII, and subsequent electron acceptors. It shares a non-heme iron and each subunit binds pheophytin, quinone, additional chlorophylls, carotenoids and lipids. There is also a Cl(-1) ion associated with D1 and D2, which is required for oxygen evolution. The PSII complex binds additional chlorophylls, carotenoids and specific lipids. is required as a cofactor.

The protein localises to the plastid. The protein resides in the chloroplast thylakoid membrane. It catalyses the reaction 2 a plastoquinone + 4 hnu + 2 H2O = 2 a plastoquinol + O2. Functionally, photosystem II (PSII) is a light-driven water:plastoquinone oxidoreductase that uses light energy to abstract electrons from H(2)O, generating O(2) and a proton gradient subsequently used for ATP formation. It consists of a core antenna complex that captures photons, and an electron transfer chain that converts photonic excitation into a charge separation. The D1/D2 (PsbA/PsbD) reaction center heterodimer binds P680, the primary electron donor of PSII as well as several subsequent electron acceptors. D2 is needed for assembly of a stable PSII complex. The protein is Photosystem II D2 protein of Gracilaria tenuistipitata var. liui (Red alga).